Reading from the N-terminus, the 209-residue chain is Thymidylate kinase (209 aa).

10–17 (GLDGAGKS) serves as a coordination point for ATP.

It belongs to the thymidylate kinase family.

The enzyme catalyses dTMP + ATP = dTDP + ADP. In terms of biological role, phosphorylation of dTMP to form dTDP in both de novo and salvage pathways of dTTP synthesis. This Francisella tularensis subsp. holarctica (strain FTNF002-00 / FTA) protein is Thymidylate kinase.